An 85-amino-acid polypeptide reads, in one-letter code: Major outer membrane protein 1 (85 aa).

An N-terminal signal peptide occupies residues M1–G18. The chain crosses the membrane as a helical span at residues Y22 to L42.

Forms extremely stable complexes with apparent masses of 150, 50, 45 and 38 kDa. Found in a ring-shaped complex of 7 nm diameter with a 2 nm channel through the middle. Complete denaturation requires temperatures over 110 degrees Celsius.

Its subcellular location is the cell outer membrane. In terms of biological role, the most abundant protein of the outer membrane, it forms a pore through it. The chain is Major outer membrane protein 1 (ihomp1) from Ignicoccus hospitalis (strain KIN4/I / DSM 18386 / JCM 14125).